A 70-amino-acid chain; its full sequence is DNA-directed RNA polymerase subunit omega (70 aa).

It belongs to the RNA polymerase subunit omega family. The RNAP catalytic core consists of 2 alpha, 1 beta, 1 beta' and 1 omega subunit. When a sigma factor is associated with the core the holoenzyme is formed, which can initiate transcription.

It carries out the reaction RNA(n) + a ribonucleoside 5'-triphosphate = RNA(n+1) + diphosphate. In terms of biological role, promotes RNA polymerase assembly. Latches the N- and C-terminal regions of the beta' subunit thereby facilitating its interaction with the beta and alpha subunits. This is DNA-directed RNA polymerase subunit omega from Staphylococcus haemolyticus (strain JCSC1435).